The primary structure comprises 124 residues: Small ribosomal subunit protein uS12 (124 aa).

Aspartate 90 is modified (3-methylthioaspartic acid).

Belongs to the universal ribosomal protein uS12 family. In terms of assembly, part of the 30S ribosomal subunit. Contacts proteins S8 and S17. May interact with IF1 in the 30S initiation complex.

Functionally, with S4 and S5 plays an important role in translational accuracy. In terms of biological role, interacts with and stabilizes bases of the 16S rRNA that are involved in tRNA selection in the A site and with the mRNA backbone. Located at the interface of the 30S and 50S subunits, it traverses the body of the 30S subunit contacting proteins on the other side and probably holding the rRNA structure together. The combined cluster of proteins S8, S12 and S17 appears to hold together the shoulder and platform of the 30S subunit. The chain is Small ribosomal subunit protein uS12 from Wolbachia pipientis wMel.